The chain runs to 748 residues: Cysteine--tRNA ligase, cytoplasmic (748 aa).

The tract at residues 1–25 (MAGSSGQQGKGRRVQPQWSPPAGTQ) is disordered. Ala-2 is subject to N-acetylalanine. Ser-19 is modified (phosphoserine). Cys-55 contributes to the Zn(2+) binding site. Gly-56 serves as a coordination point for L-cysteine. The 'HIGH' region signature appears at 57–67 (PTVYDASHMGH). Thr-96 lines the L-cysteine pocket. A 'KIIK' region motif is present at residues 101–104 (KIIK). Phosphoserine occurs at positions 305 and 307. 3 residues coordinate Zn(2+): Cys-348, His-373, and Glu-377. His-373 is an L-cysteine binding site. The 'KMSKS' region motif lies at 406 to 410 (KMSKS). Residue Lys-409 participates in ATP binding. Basic and acidic residues-rich tracts occupy residues 654–679 (KRQV…EAAK) and 700–717 (KFDE…KELS). Disordered stretches follow at residues 654–686 (KRQV…MKIP) and 700–721 (KFDE…KGQA). A Phosphoserine modification is found at Ser-746.

Homodimer. Zn(2+) is required as a cofactor.

The protein resides in the cytoplasm. It catalyses the reaction tRNA(Cys) + L-cysteine + ATP = L-cysteinyl-tRNA(Cys) + AMP + diphosphate. In terms of biological role, catalyzes the ATP-dependent ligation of cysteine to tRNA(Cys). The polypeptide is Cysteine--tRNA ligase, cytoplasmic (CARS1) (Macaca fascicularis (Crab-eating macaque)).